The chain runs to 425 residues: tRNA (guanine-N(7)-)-methyltransferase non-catalytic subunit wuho (425 aa).

The disordered stretch occupies residues 67–102; it reads ATCAGKEPGGKEQQLTKQPEEGGTTASGSGVTSTSV. Residues 88 to 102 are compositionally biased toward low complexity; it reads GGTTASGSGVTSTSV. WD repeat units follow at residues 97-138, 142-181, 185-224, 228-266, and 325-365; these read VTST…ARLL, PLARAASAVRFCSDSSSVLVTDKTGDCYQYDCVELEAPPR, GHLSVVYDILWSEDQQHIITCDRDDKIRVTNYPATFDIHS, GHREFVSGLALLTDKHIASASGDKTLRVWNYIQGKELLQ, and AGSW…PATS.

The protein belongs to the WD repeat TRM82 family. In terms of assembly, forms a heterodimer with the catalytic subunit Mettl1. Interacts with mei-P26 and weakly interacts with bgcn; required for the function or formation of the mei-P26-bgcn-bam-sxl complex. Interacts with nanos; may be involved in mei-P26-dependent derepression of the BMP signaling pathway. Interacts with Myc; the interaction may be mediated by mei-P26 and may be involved in the regulation of ribosome biogenesis. As to expression, in testis, it is present at high level in hub cells, a niche for germline stem cells of testis. Ubiquitously expressed in all testicular cells throughout spermatogenesis. Ubiquitously expressed in all germline and somatic cells of the ovary.

It is found in the nucleus. The protein resides in the cytoplasm. It functions in the pathway tRNA modification; N(7)-methylguanine-tRNA biosynthesis. In terms of biological role, required for the Mettl1-dependent formation of N(7)-methylguanine at position 46 (m7G46) in tRNA. In the Mettl1-wuho methyltransferase complex, it is required to stabilize and induce conformational changes of the catalytic subunit. Required for binding of nanos mRNA and repression of translation by the mei-P26-bgcn-bam-sxl complex. May cooperate with mei-P26 and nanos to derepress the BMP signaling pathway. May cooperate with mei-P26 to suppress expression of a subset of microRNAs. May cooperate with mei-P26 to regulate bam expression levels in germline cells during gametogenesis. Required to promote mitosis to meiosis transition during gametogenesis. May regulate germline cell division in part by regulating ribosome biogenesis. The sequence is that of tRNA (guanine-N(7)-)-methyltransferase non-catalytic subunit wuho from Drosophila yakuba (Fruit fly).